The chain runs to 141 residues: ATP synthase epsilon chain (141 aa).

The protein belongs to the ATPase epsilon chain family. In terms of assembly, F-type ATPases have 2 components, CF(1) - the catalytic core - and CF(0) - the membrane proton channel. CF(1) has five subunits: alpha(3), beta(3), gamma(1), delta(1), epsilon(1). CF(0) has three main subunits: a, b and c.

The protein resides in the cell membrane. Its function is as follows. Produces ATP from ADP in the presence of a proton gradient across the membrane. The chain is ATP synthase epsilon chain from Lactococcus lactis subsp. cremoris (strain SK11).